Consider the following 269-residue polypeptide: tRNA pseudouridine synthase A (269 aa).

Asp51 (nucleophile) is an active-site residue. Tyr109 serves as a coordination point for substrate.

This sequence belongs to the tRNA pseudouridine synthase TruA family. In terms of assembly, homodimer.

It carries out the reaction uridine(38/39/40) in tRNA = pseudouridine(38/39/40) in tRNA. Formation of pseudouridine at positions 38, 39 and 40 in the anticodon stem and loop of transfer RNAs. In Haemophilus influenzae (strain PittGG), this protein is tRNA pseudouridine synthase A.